The primary structure comprises 663 residues: Zinc finger protein 44 (663 aa).

A KRAB domain is found at 52 to 138; the sequence is VAFEDVAVNF…GETLSQIRNS (87 aa). Residues 189-211 form a C2H2-type 1; atypical zinc finger; it reads YTHKQCGKGLSYRHSFQTCERPH. Residues 217-239 form a C2H2-type 2; degenerate zinc finger; sequence YDCKECGKTFSSPGNLRRHMVVK. 15 consecutive C2H2-type zinc fingers follow at residues 245-267, 273-295, 301-323, 329-351, 357-379, 385-407, 413-435, 441-463, 469-491, 497-518, 524-546, 552-574, 580-602, 608-630, and 636-658; these read YKCELCGKAFFWPSLLRMHERTH, YECKQCSKAFPVYSSYLRHEKIH, YECKQCSKAFPDYSSYLRHERTH, YKCKQCGKAFSVSGSLRVHERIH, YTCKQCGKAFCHLGSFQRHMIMH, HKCKICGKGFDFPGSARIHEGTH, YECKQCGKLLSHRSSFRRHMMAH, HKCTVCGKAFDSPSVFQRHERTH, YECKQCGKAFRTSSSLRKHETTH, YKCKCGKAFSDLFSFQSHETTH, YECKECGKAFSSFKYFCRHERTH, YECQICGKAFSRFSYLKTHERTH, YECKQCRKAFFWPSFLLRHERTH, YECKHCGKAFSRSSFCREHERTH, and YECKECGKAFSSLSSFNRHKRTH.

Belongs to the krueppel C2H2-type zinc-finger protein family.

It localises to the nucleus. Functionally, may be involved in transcriptional regulation. This chain is Zinc finger protein 44 (ZNF44), found in Homo sapiens (Human).